The primary structure comprises 150 residues: Arginine repressor (150 aa).

The protein belongs to the ArgR family.

Its subcellular location is the cytoplasm. Its pathway is amino-acid biosynthesis; L-arginine biosynthesis [regulation]. Its function is as follows. Regulates arginine biosynthesis genes. The polypeptide is Arginine repressor (Staphylococcus haemolyticus (strain JCSC1435)).